A 476-amino-acid chain; its full sequence is 3-ketoacyl-CoA synthase 12 (476 aa).

An N-terminal signal peptide occupies residues 1-25 (MDLLFLFFSLLLSYLFFKIWKLIDS). Residues 26-313 (KQDKDCYILD…FMLKLLIKKI (288 aa)) enclose the FAE domain. Catalysis depends on residues Cys168, His247, His344, His348, His377, and Asn381.

Belongs to the thiolase-like superfamily. Chalcone/stilbene synthases family. Expressed in siliques, flowers and leaves.

Its subcellular location is the endoplasmic reticulum. It catalyses the reaction a very-long-chain acyl-CoA + malonyl-CoA + H(+) = a very-long-chain 3-oxoacyl-CoA + CO2 + CoA. Its pathway is lipid metabolism; fatty acid biosynthesis. This is 3-ketoacyl-CoA synthase 12 from Arabidopsis thaliana (Mouse-ear cress).